Consider the following 367-residue polypeptide: Chorismate synthase (367 aa).

Arg-48 and Arg-54 together coordinate NADP(+). Residues 125–127, 238–239, Gly-278, 293–297, and Arg-319 contribute to the FMN site; these read RSS, NA, and KPTSS.

Belongs to the chorismate synthase family. Homotetramer. FMNH2 is required as a cofactor.

It carries out the reaction 5-O-(1-carboxyvinyl)-3-phosphoshikimate = chorismate + phosphate. It participates in metabolic intermediate biosynthesis; chorismate biosynthesis; chorismate from D-erythrose 4-phosphate and phosphoenolpyruvate: step 7/7. Its function is as follows. Catalyzes the anti-1,4-elimination of the C-3 phosphate and the C-6 proR hydrogen from 5-enolpyruvylshikimate-3-phosphate (EPSP) to yield chorismate, which is the branch point compound that serves as the starting substrate for the three terminal pathways of aromatic amino acid biosynthesis. This reaction introduces a second double bond into the aromatic ring system. The polypeptide is Chorismate synthase (Stenotrophomonas maltophilia (strain R551-3)).